The following is a 418-amino-acid chain: Serine hydroxymethyltransferase (418 aa).

(6S)-5,6,7,8-tetrahydrofolate contacts are provided by residues Leu121 and 125 to 127; that span reads GHL. Lys230 carries the post-translational modification N6-(pyridoxal phosphate)lysine. A (6S)-5,6,7,8-tetrahydrofolate-binding site is contributed by 355-357; that stretch reads SPF.

Belongs to the SHMT family. As to quaternary structure, homodimer. It depends on pyridoxal 5'-phosphate as a cofactor.

It localises to the cytoplasm. The enzyme catalyses (6R)-5,10-methylene-5,6,7,8-tetrahydrofolate + glycine + H2O = (6S)-5,6,7,8-tetrahydrofolate + L-serine. It participates in one-carbon metabolism; tetrahydrofolate interconversion. The protein operates within amino-acid biosynthesis; glycine biosynthesis; glycine from L-serine: step 1/1. In terms of biological role, catalyzes the reversible interconversion of serine and glycine with tetrahydrofolate (THF) serving as the one-carbon carrier. This reaction serves as the major source of one-carbon groups required for the biosynthesis of purines, thymidylate, methionine, and other important biomolecules. Also exhibits THF-independent aldolase activity toward beta-hydroxyamino acids, producing glycine and aldehydes, via a retro-aldol mechanism. The protein is Serine hydroxymethyltransferase of Methylococcus capsulatus (strain ATCC 33009 / NCIMB 11132 / Bath).